The following is a 385-amino-acid chain: Photoreceptor ankyrin repeat protein (385 aa).

ANK repeat units lie at residues 17 to 46, 53 to 83, 87 to 116, 122 to 151, and 156 to 190; these read CNLK…SPEE, NGRT…DVNQ, DGNT…GLDL, RGLT…DLSS, and RGKT…QLSL. A disordered region spans residues 270-385; sequence LGTRGKSVPE…GGLGQAGGSK (116 aa). The segment covering 284–297 has biased composition (pro residues); it reads APPPPPEPHPPQQV. Polar residues predominate over residues 304–326; it reads APNQSPQSMFSQWLQSRDSTRSQ. The segment covering 361-373 has biased composition (basic and acidic residues); the sequence is FQERKKKEEETEP. Over residues 374 to 385 the composition is skewed to gly residues; that stretch reads RGGGLGQAGGSK.

Isoform 1: Expressed predominantly in the retina. Isoform 2: Expressed in the pineal gland.

It localises to the cytoplasm. The protein resides in the cytosol. It is found in the nucleus. Functionally, acts as a transcriptional repressor for CRX-activated photoreceptor gene regulation. This chain is Photoreceptor ankyrin repeat protein, found in Mus musculus (Mouse).